The sequence spans 248 residues: PF03932 family protein CutC (248 aa).

This sequence belongs to the CutC family. As to quaternary structure, homodimer.

The protein localises to the cytoplasm. The sequence is that of PF03932 family protein CutC from Salmonella schwarzengrund (strain CVM19633).